We begin with the raw amino-acid sequence, 107 residues long: Large ribosomal subunit protein uL24 (107 aa).

The protein belongs to the universal ribosomal protein uL24 family. As to quaternary structure, part of the 50S ribosomal subunit.

In terms of biological role, one of two assembly initiator proteins, it binds directly to the 5'-end of the 23S rRNA, where it nucleates assembly of the 50S subunit. One of the proteins that surrounds the polypeptide exit tunnel on the outside of the subunit. The polypeptide is Large ribosomal subunit protein uL24 (Neisseria gonorrhoeae (strain ATCC 700825 / FA 1090)).